A 326-amino-acid chain; its full sequence is L-lactate dehydrogenase (326 aa).

Residue 39-60 (DVVTGMPEGKALDDSQATSIAD) coordinates NAD(+). 3 residues coordinate substrate: Arg-99, Asn-131, and Arg-162. Asn-131 is an NAD(+) binding site. His-186 acts as the Proton acceptor in catalysis.

This sequence belongs to the LDH/MDH superfamily. LDH family. Homotetramer.

It carries out the reaction (S)-lactate + NAD(+) = pyruvate + NADH + H(+). It participates in fermentation; pyruvate fermentation to lactate; (S)-lactate from pyruvate: step 1/1. The sequence is that of L-lactate dehydrogenase from Toxoplasma gondii.